Here is an 84-residue protein sequence, read N- to C-terminus: Acyl carrier protein (84 aa).

In terms of domain architecture, Carrier spans 6-81 (EEILTGLAEI…DAVDYIANAT (76 aa)). Ser41 is modified (O-(pantetheine 4'-phosphoryl)serine).

This sequence belongs to the acyl carrier protein (ACP) family. Post-translationally, 4'-phosphopantetheine is transferred from CoA to a specific serine of apo-ACP by AcpS. This modification is essential for activity because fatty acids are bound in thioester linkage to the sulfhydryl of the prosthetic group.

It is found in the cytoplasm. The protein operates within lipid metabolism; fatty acid biosynthesis. Functionally, carrier of the growing fatty acid chain in fatty acid biosynthesis. This Acidothermus cellulolyticus (strain ATCC 43068 / DSM 8971 / 11B) protein is Acyl carrier protein.